The following is a 278-amino-acid chain: uncharacterized protein (278 aa).

The protein localises to the cytoplasm. It localises to the nucleus. Probable methyltransferase. This is an uncharacterized protein from Schizosaccharomyces pombe (strain 972 / ATCC 24843) (Fission yeast).